Consider the following 113-residue polypeptide: Large ribosomal subunit protein bL19 (113 aa).

Belongs to the bacterial ribosomal protein bL19 family.

This protein is located at the 30S-50S ribosomal subunit interface and may play a role in the structure and function of the aminoacyl-tRNA binding site. The chain is Large ribosomal subunit protein bL19 from Corynebacterium diphtheriae (strain ATCC 700971 / NCTC 13129 / Biotype gravis).